Here is a 203-residue protein sequence, read N- to C-terminus: Probable GTP-binding protein EngB (203 aa).

An EngB-type G domain is found at 24–199 (DGSEVAFAGR…HTVIETWLGL (176 aa)). Residues 32–39 (GRSNAGKS), 59–63 (GRTQQ), 77–80 (DLPG), 144–147 (TKAD), and 178–180 (FSS) contribute to the GTP site. 2 residues coordinate Mg(2+): serine 39 and threonine 61.

Belongs to the TRAFAC class TrmE-Era-EngA-EngB-Septin-like GTPase superfamily. EngB GTPase family. Mg(2+) serves as cofactor.

Functionally, necessary for normal cell division and for the maintenance of normal septation. This is Probable GTP-binding protein EngB from Xylella fastidiosa (strain Temecula1 / ATCC 700964).